A 172-amino-acid chain; its full sequence is MGEAQLLVEDGNQKLFPCEVCGRCFATDVLERHGPICKKVFNKKRKPFNSLKQRLQGTDIPTVGKSPQPKVQPVRKSNWRQQHEDFINTIRSAKQFTLAIKEGRPLPPPPRPTSNPDYIQCPYCMRRFNETAAQRHINFCKNQTSRPVFDPIQMAARLVSRAQCKAQASLKK.

2 consecutive C2HC/C3H-type zinc fingers follow at residues 14 to 43 and 117 to 146; these read KLFP…VFNK and DYIQ…QTSR. Residues cysteine 18, cysteine 21, histidine 33, cysteine 37, cysteine 121, cysteine 124, histidine 136, and cysteine 140 each contribute to the Zn(2+) site.

Belongs to the ZC2HC1 family. The cofactor is Zn(2+).

The polypeptide is Zinc finger C2HC domain-containing protein 1B (Zc2hc1b) (Mus musculus (Mouse)).